The sequence spans 345 residues: uncharacterized protein (345 aa).

Residues 1 to 198 (MDVLSAVLLA…LSEGLLDHEE (198 aa)) enclose the CNNM transmembrane domain. 2 helical membrane-spanning segments follow: residues 3–23 (VLSAVLLALLLIGANAFFVGA) and 95–115 (VPPALLHTLSLAIVVALHVLL). CBS domains lie at 217–280 (AVPL…PQTV) and 285–342 (VVRP…MRDG). The helical transmembrane segment at 312–332 (LALVTADNGSVVGMVALEDVV) threads the bilayer.

Belongs to the TerC family.

Its subcellular location is the cell membrane. This is an uncharacterized protein from Mycobacterium tuberculosis (strain ATCC 25618 / H37Rv).